The following is a 541-amino-acid chain: Phenazine N-monooxygenase PhzNO1 (541 aa).

FAD is bound by residues Asp39, 47-50 (TWYW), 59-60 (DT), Tyr65, and Ile112. Residue 57–59 (RAD) coordinates NADP(+). NADP(+) contacts are provided by residues 186 to 192 (TGSTGVQ), 209 to 210 (RS), and Trp492.

It belongs to the FAD-binding monooxygenase family. The cofactor is FAD.

The catalysed reaction is 1,6-dihydroxyphenazine + NADPH + O2 = 1,6-dihydroxyphenazine N(5)-oxide + NADP(+) + H2O. It catalyses the reaction 1,6-dihydroxyphenazine N(5)-oxide + NADPH + O2 = 1,6-dihydroxyphenazine N(5),N(10)-dioxide + NADP(+) + H2O. It carries out the reaction 1-hydroxy-6-methoxyphenazine + NADPH + O2 = 1-hydroxy-6-methoxyphenazine N(10)-oxide + NADP(+) + H2O. The enzyme catalyses quinolin-8-ol + NADPH + O2 = 8-hydroxyquinoline N-oxide + NADP(+) + H2O. In terms of biological role, involved in the biosynthesis of phenazine natural products including myxin, an N(5),N(10)-dioxide phenazine antiobiotic, which has antimicrobial activity. Catalyzes the aromatic N-oxidations of phenazines, such as 1,6-dihydroxyphenazine (DHP), 1,6-dihydroxyphenazine N(5)-oxide (DHPO) and 1-hydroxy-6-methoxyphenazine to produce DHPO, iodinin (1,6-dihydroxyphenazine N(5),N(10)-dioxide) and 1-hydroxy-6-methoxyphenazine N(10)-oxide, respectively. Also catalyzes the N-oxidation of 8-hydroxyquinoline, but not 6-hydroxyquinoline (6-HQ), quinoline, quinoxaline, quinine and 2-phenylpyridine. The polypeptide is Phenazine N-monooxygenase PhzNO1 (Lysobacter antibioticus).